The following is a 333-amino-acid chain: F420-dependent glucose-6-phosphate dehydrogenase (333 aa).

Coenzyme F420-(gamma-Glu)n is bound at residue Asp37. The Proton donor role is filled by His38. Coenzyme F420-(gamma-Glu)n contacts are provided by residues Thr74 and 105–106 (SG). Catalysis depends on Glu107, which acts as the Proton acceptor. Residues Asn110, 174–175 (GG), and 177–178 (VV) contribute to the coenzyme F420-(gamma-Glu)n site. The substrate site is built by Thr192, Lys195, Lys256, and Arg280.

It belongs to the F420-dependent glucose-6-phosphate dehydrogenase family. Homodimer.

It carries out the reaction oxidized coenzyme F420-(gamma-L-Glu)(n) + D-glucose 6-phosphate + H(+) = 6-phospho-D-glucono-1,5-lactone + reduced coenzyme F420-(gamma-L-Glu)(n). Functionally, catalyzes the coenzyme F420-dependent oxidation of glucose 6-phosphate (G6P) to 6-phosphogluconolactone. This is F420-dependent glucose-6-phosphate dehydrogenase from Amycolatopsis mediterranei (strain U-32).